The following is a 262-amino-acid chain: Shikimate dehydrogenase (NADP(+)) (262 aa).

Shikimate-binding positions include 15–17 and T62; that span reads SRS. The active-site Proton acceptor is the K66. E78 contacts NADP(+). Shikimate is bound by residues N87 and D102. Residues 126 to 130, 150 to 155, and M214 contribute to the NADP(+) site; these read GAGGA and NRTLAR. Residue Y216 participates in shikimate binding. G236 is a binding site for NADP(+).

The protein belongs to the shikimate dehydrogenase family. As to quaternary structure, homodimer.

The enzyme catalyses shikimate + NADP(+) = 3-dehydroshikimate + NADPH + H(+). It participates in metabolic intermediate biosynthesis; chorismate biosynthesis; chorismate from D-erythrose 4-phosphate and phosphoenolpyruvate: step 4/7. In terms of biological role, involved in the biosynthesis of the chorismate, which leads to the biosynthesis of aromatic amino acids. Catalyzes the reversible NADPH linked reduction of 3-dehydroshikimate (DHSA) to yield shikimate (SA). The sequence is that of Shikimate dehydrogenase (NADP(+)) from Acinetobacter baumannii (strain SDF).